Reading from the N-terminus, the 220-residue chain is MTLQISAQNVKALRDKTGAGMMDCKKALEASNGNEEKALDSLRQKGLASANKKSGRTAIEGLLESYIHTGGRIGVLVEVNCETDFVARRPEFQKLAKDIAMQIAACPNVEYVSMMHISDETISLEKRIEAGRDDIKDKPAEMIEKIVEGRIKKRLKELSLLDQMFIRNQDITIEDLINQNIALLGENIKIRRFVRFILGGGEENTKANFADEVADILNKK.

This sequence belongs to the EF-Ts family.

It localises to the plastid. Its subcellular location is the chloroplast. Functionally, associates with the EF-Tu.GDP complex and induces the exchange of GDP to GTP. It remains bound to the aminoacyl-tRNA.EF-Tu.GTP complex up to the GTP hydrolysis stage on the ribosome. This chain is Elongation factor Ts, chloroplastic (tsf), found in Porphyra purpurea (Red seaweed).